The primary structure comprises 398 residues: Pheromone receptor transcription activator (398 aa).

3 disordered regions span residues 1 to 30 (MMDE…YLED), 101 to 125 (TDQN…ESGY), and 254 to 317 (PSTG…DRPP). Positions 20–74 (GSSQGNSYLEDRQKRQNTFTKRKAGIFKKANELALLTGSEVMVLVVSETGLVHTF) constitute an MADS-box domain. Residues 106-121 (SQASQAKQSSAQLSDS) show a composition bias toward low complexity. 2 stretches are compositionally biased toward polar residues: residues 262–273 (TTGQHSVNSPPS) and 282–294 (NKSF…PQTP).

Its subcellular location is the nucleus. Functionally, in response to mating-pheromone signaling or nitrogen starvation, it interacts with mat1-Pc. This activates the expression of one of two mating-type-specific genes sxa2 or map3, which leads to inactivation of the P-factor. May also interact with mat1-Mc. The chain is Pheromone receptor transcription activator (map1) from Schizosaccharomyces pombe (strain 972 / ATCC 24843) (Fission yeast).